We begin with the raw amino-acid sequence, 454 residues long: Probable xylan O-acetyltransferase 9 (454 aa).

At 1–15 (MKAPPPPSPVAKRAR) the chain is on the cytoplasmic side. A helical; Signal-anchor for type II membrane protein membrane pass occupies residues 16 to 36 (VSPFVFLLVLFLLLFSFLYGE). Over 37–454 (DLKELLGSQA…ELLYTKLFYP (418 aa)) the chain is Lumenal. Intrachain disulfides connect Cys101–Cys152, Cys123–Cys188, Cys132–Cys435, and Cys352–Cys431. The GDS motif signature appears at 175–177 (GDS). Ser177 acts as the Nucleophile in catalysis. N-linked (GlcNAc...) asparagine glycosylation is found at Asn219, Asn293, and Asn394. The active-site Proton donor is Asp430. The DXXH motif motif lies at 430–433 (DCVH). His433 functions as the Proton acceptor in the catalytic mechanism.

The protein belongs to the PC-esterase family. TBL subfamily.

It is found in the golgi apparatus membrane. Functionally, probable xylan acetyltransferase required for 2-O- and 3-O-monoacetylation of xylosyl residues in xylan. Possesses extremely low activity in vitro. The sequence is that of Probable xylan O-acetyltransferase 9 from Oryza sativa subsp. japonica (Rice).